We begin with the raw amino-acid sequence, 582 residues long: Phosphoribosylaminoimidazole carboxylase (582 aa).

Residues 114 to 305 (KKYLAERGVA…QFENHLRAIL (192 aa)) enclose the ATP-grasp domain. Residue 143–200 (AGRLGLPLMLKAKTLAYDGRGNSPLKSASSEDIQASLKFLGDRPLYAEGWAPFVKEVA) coordinates ATP.

The protein in the C-terminal section; belongs to the AIR carboxylase family. Class I subfamily.

It catalyses the reaction 5-amino-1-(5-phospho-D-ribosyl)imidazole-4-carboxylate + H(+) = 5-amino-1-(5-phospho-beta-D-ribosyl)imidazole + CO2. It participates in purine metabolism; IMP biosynthesis via de novo pathway; 5-amino-1-(5-phospho-D-ribosyl)imidazole-4-carboxylate from 5-amino-1-(5-phospho-D-ribosyl)imidazole (carboxylase route): step 1/1. In Cryptococcus neoformans var. neoformans serotype D (strain B-3501A) (Filobasidiella neoformans), this protein is Phosphoribosylaminoimidazole carboxylase (ADE2).